The sequence spans 318 residues: Strigolactone esterase D14 (318 aa).

Residues 1-11 (MLRSTHPPPSS) show a composition bias toward pro residues. Residues 1-48 (MLRSTHPPPSSPSSSSSGGGGGGGSSASSSSEKTMVGGGGGGGGGSGS) form a disordered region. Residues 36–47 (VGGGGGGGGGSG) are compositionally biased toward gly residues. The active-site Nucleophile is Ser-147. The substrate site is built by Ser-147 and Cys-241. Active-site residues include Asp-268 and His-297. His-297 serves as a coordination point for substrate.

Belongs to the AB hydrolase superfamily. In terms of assembly, interacts with D53. The interaction between D53 and D14 is enhanced in the presence of strigolactones. The interaction with D53 occurs in the presence of (2'R) stereoisomers of strigolactones, but not (2'S) stereoisomers. Interacts with SLR1 in a strigolactone-dependent manner. Interacts with D3 in a strigolactone-dependent manner. In terms of tissue distribution, expressed in the parenchyma cells of the root stele and lateral roots, vascular tissues of vein and leaf sheath, ligule base, auricle base and stem base.

Its subcellular location is the cytoplasm. It is found in the nucleus. In terms of biological role, involved in strigolactone (SL) signaling pathway. May function downstream of SL synthesis, as a component of hormone signaling or as an enzyme that participates in the conversion of SL to the bioactive form. Strigolactones are hormones that inhibit tillering and shoot branching through the MAX-dependent pathway, contribute to the regulation of shoot architectural response to phosphate-limiting conditions and function as rhizosphere signal that stimulates hyphal branching of arbuscular mycorrhizal fungi and trigger seed germination of root parasitic weeds. Strigolactone-dependent association of D14 with D3 and D53 (a repressor of SL signaling) triggers D53 ubiquitination and degradation. Hydrolyzes the butenolide ring of SLs. A reaction product D-OH is trapped in the cavity of D14, inducing the interaction with SLR1, and probably with other proteins such as D3 and D53. Contributes to the negative regulation of gibberellin signaling. This Oryza sativa subsp. japonica (Rice) protein is Strigolactone esterase D14.